The primary structure comprises 150 residues: SPbeta prophage-derived uncharacterized protein YoqH (150 aa).

A signal peptide spans 1–23; that stretch reads MKRFILVLSFLSIIVAYPIQTNA.

In Bacillus subtilis (strain 168), this protein is SPbeta prophage-derived uncharacterized protein YoqH (yoqH).